Reading from the N-terminus, the 699-residue chain is eEF1A lysine and N-terminal methyltransferase (699 aa).

N-acetylmethionine is present on Met-1. Residue Ser-267 is modified to Phosphoserine. Residues 433–460 (VSHRAQKKRKKDRKKHRPADTPEDLPAA) form a disordered region. The segment covering 436–449 (RAQKKRKKDRKKHR) has biased composition (basic residues).

The protein belongs to the methyltransferase superfamily. As to quaternary structure, forms a tripartite complex containing GAB1, METTL13 and SPRY2. Within the complex interacts with GAB1 and SPRY2.

It is found in the cytoplasm. The protein resides in the nucleus. It localises to the mitochondrion. It carries out the reaction L-lysyl-[protein] + S-adenosyl-L-methionine = N(6)-methyl-L-lysyl-[protein] + S-adenosyl-L-homocysteine + H(+). The catalysed reaction is N(6)-methyl-L-lysyl-[protein] + S-adenosyl-L-methionine = N(6),N(6)-dimethyl-L-lysyl-[protein] + S-adenosyl-L-homocysteine + H(+). It catalyses the reaction N-terminal glycyl-L-lysyl-L-glutamyl-[protein] + 3 S-adenosyl-L-methionine = N-terminal N,N,N-trimethyl-glycyl-L-lysyl-L-glutamyl-[protein] + 3 S-adenosyl-L-homocysteine + 3 H(+). In terms of biological role, dual methyltransferase that catalyzes methylation of elongation factor 1-alpha (EEF1A1 and EEF1A2) at two different positions, and is therefore involved in the regulation of mRNA translation. Via its C-terminus, methylates EEF1A1 and EEF1A2 at the N-terminal residue 'Gly-2'. Via its N-terminus dimethylates EEF1A1 and EEF1A2 at residue 'Lys-55'. Has no activity towards core histones H2A, H2B, H3 and H4. The sequence is that of eEF1A lysine and N-terminal methyltransferase (METTL13) from Bos taurus (Bovine).